Consider the following 149-residue polypeptide: Arginine repressor (149 aa).

The protein belongs to the ArgR family.

Its subcellular location is the cytoplasm. The protein operates within amino-acid biosynthesis; L-arginine biosynthesis [regulation]. In terms of biological role, regulates arginine biosynthesis genes. This Geobacillus kaustophilus (strain HTA426) protein is Arginine repressor.